The sequence spans 114 residues: MFAFKKAQRLLKKNDFDFVFESAKKITTDDFIFLFRENKLGYARLGLALSKKMIAKAHDRNRIKRLLRESFRHTNLPAVDIIILARPGLAKKTNLGINTKLNKTWEKLASCYGK.

This sequence belongs to the RnpA family. As to quaternary structure, consists of a catalytic RNA component (M1 or rnpB) and a protein subunit.

The enzyme catalyses Endonucleolytic cleavage of RNA, removing 5'-extranucleotides from tRNA precursor.. Its function is as follows. RNaseP catalyzes the removal of the 5'-leader sequence from pre-tRNA to produce the mature 5'-terminus. It can also cleave other RNA substrates such as 4.5S RNA. The protein component plays an auxiliary but essential role in vivo by binding to the 5'-leader sequence and broadening the substrate specificity of the ribozyme. This chain is Ribonuclease P protein component, found in Legionella pneumophila (strain Paris).